The chain runs to 155 residues: S-ribosylhomocysteine lyase (155 aa).

3 residues coordinate Fe cation: H57, H61, and C124.

The protein belongs to the LuxS family. As to quaternary structure, homodimer. Fe cation serves as cofactor.

The enzyme catalyses S-(5-deoxy-D-ribos-5-yl)-L-homocysteine = (S)-4,5-dihydroxypentane-2,3-dione + L-homocysteine. Involved in the synthesis of autoinducer 2 (AI-2) which is secreted by bacteria and is used to communicate both the cell density and the metabolic potential of the environment. The regulation of gene expression in response to changes in cell density is called quorum sensing. Catalyzes the transformation of S-ribosylhomocysteine (RHC) to homocysteine (HC) and 4,5-dihydroxy-2,3-pentadione (DPD). The chain is S-ribosylhomocysteine lyase from Listeria monocytogenes serovar 1/2a (strain ATCC BAA-679 / EGD-e).